Here is a 398-residue protein sequence, read N- to C-terminus: Succinate--CoA ligase [ADP-forming] subunit beta (398 aa).

The ATP-grasp domain occupies 9–254 (KRLLHEYGAP…ISEEDPKEIE (246 aa)). Residues K46, 53–55 (GRG), E109, A112, and E117 contribute to the ATP site. The Mg(2+) site is built by N209 and D223. Residues N274 and 331 to 333 (GIM) each bind substrate.

This sequence belongs to the succinate/malate CoA ligase beta subunit family. As to quaternary structure, heterotetramer of two alpha and two beta subunits. Mg(2+) is required as a cofactor.

It carries out the reaction succinate + ATP + CoA = succinyl-CoA + ADP + phosphate. It catalyses the reaction GTP + succinate + CoA = succinyl-CoA + GDP + phosphate. The protein operates within carbohydrate metabolism; tricarboxylic acid cycle; succinate from succinyl-CoA (ligase route): step 1/1. Succinyl-CoA synthetase functions in the citric acid cycle (TCA), coupling the hydrolysis of succinyl-CoA to the synthesis of either ATP or GTP and thus represents the only step of substrate-level phosphorylation in the TCA. The beta subunit provides nucleotide specificity of the enzyme and binds the substrate succinate, while the binding sites for coenzyme A and phosphate are found in the alpha subunit. This chain is Succinate--CoA ligase [ADP-forming] subunit beta, found in Bartonella bacilliformis (strain ATCC 35685 / KC583 / Herrer 020/F12,63).